We begin with the raw amino-acid sequence, 392 residues long: 23S rRNA (uracil(747)-C(5))-methyltransferase RlmC (392 aa).

Cys-4, Cys-12, Cys-15, and Cys-93 together coordinate [4Fe-4S] cluster. 4 residues coordinate S-adenosyl-L-methionine: Gln-218, Phe-247, Glu-275, and Asn-321. Cys-348 functions as the Nucleophile in the catalytic mechanism.

The protein belongs to the class I-like SAM-binding methyltransferase superfamily. RNA M5U methyltransferase family. RlmC subfamily.

The enzyme catalyses uridine(747) in 23S rRNA + S-adenosyl-L-methionine = 5-methyluridine(747) in 23S rRNA + S-adenosyl-L-homocysteine + H(+). Functionally, catalyzes the formation of 5-methyl-uridine at position 747 (m5U747) in 23S rRNA. In Haemophilus influenzae (strain PittGG), this protein is 23S rRNA (uracil(747)-C(5))-methyltransferase RlmC.